A 715-amino-acid chain; its full sequence is Ribosomal RNA large subunit methyltransferase K/L (715 aa).

In terms of domain architecture, THUMP spans T43–L154.

The protein belongs to the methyltransferase superfamily. RlmKL family.

The protein localises to the cytoplasm. The enzyme catalyses guanosine(2445) in 23S rRNA + S-adenosyl-L-methionine = N(2)-methylguanosine(2445) in 23S rRNA + S-adenosyl-L-homocysteine + H(+). It carries out the reaction guanosine(2069) in 23S rRNA + S-adenosyl-L-methionine = N(2)-methylguanosine(2069) in 23S rRNA + S-adenosyl-L-homocysteine + H(+). Specifically methylates the guanine in position 2445 (m2G2445) and the guanine in position 2069 (m7G2069) of 23S rRNA. The protein is Ribosomal RNA large subunit methyltransferase K/L of Mannheimia succiniciproducens (strain KCTC 0769BP / MBEL55E).